The primary structure comprises 535 residues: Major glycerophosphoinositol permease GIT3 (535 aa).

A helical membrane pass occupies residues 49–69 (VVTSVKANSLWPAFASGAGLF). N-linked (GlcNAc...) asparagine glycosylation occurs at Asn-75. 5 consecutive transmembrane segments (helical) span residues 101–121 (NIAS…GYIS), 137–157 (LIFF…QGFF), 165–185 (FFLG…ASEF), 204–224 (AMID…IWIF), and 232–252 (LWRV…FMRL). Asn-256 is a glycosylation site (N-linked (GlcNAc...) asparagine). Helical transmembrane passes span 275 to 295 (WWLI…IWFI), 324 to 344 (WGWS…GAIS), 352 to 372 (LTLA…SACL), 378 to 398 (HIAG…FGPG), 419 to 439 (GIAA…FPAI), and 455 to 475 (VPFY…IFFC). Asn-532 is a glycosylation site (N-linked (GlcNAc...) asparagine).

This sequence belongs to the major facilitator superfamily. Sugar transporter (TC 2.A.1.1) family.

The protein resides in the cell membrane. It catalyses the reaction sn-glycerol 3-phosphocholine(out) = sn-glycerol 3-phosphocholine(in). In terms of biological role, glycerophosphodiester transporter that mediates uptake of glycerophosphocholine (GroPCho) with GIT4. GIT3 acts as the major GroPCho permease. Does not possess detectable glycerophosphoinositol (GroPIns) transport activity. The expanded ability to utilize GroPIns and GroPCho results from the organism's pathogenic nature and its need to occupy a variety of environments within its host organism. This possibility is buttressed by the fact that GroPIns and GroPCho are present and abundant in human fluids. The sequence is that of Major glycerophosphoinositol permease GIT3 from Candida albicans (strain SC5314 / ATCC MYA-2876) (Yeast).